The sequence spans 651 residues: ATP-binding cassette sub-family G member 5 (651 aa).

The disordered stretch occupies residues 1–32 (MGDLSSLTPGGSMGLQVNRGSQSSLEGAPATA). At 1–383 (MGDLSSLTPG…RVTRNLVRNK (383 aa)) the chain is on the cytoplasmic side. The region spanning 52-293 (RPWWDITSCR…FNDCGYPCPE (242 aa)) is the ABC transporter domain. 86 to 93 (GSSGSGKT) contacts ATP. The helical transmembrane segment at 384–404 (LAVITRLLQNLIMGLFLLFFV) threads the bilayer. Positions 388–645 (TRLLQNLIMG…ILGIVVFKIR (258 aa)) constitute an ABC transmembrane type-2 domain. Residues 405-421 (LRVRSNVLKGAIQDRVG) are Extracellular-facing. Residues 422–442 (LLYQFVGATPYTGMLNAVNLF) form a helical membrane-spanning segment. Topologically, residues 443 to 467 (PVLRAVSDQESQDGLYQKWQMMLAY) are cytoplasmic. A helical membrane pass occupies residues 468 to 489 (ALHVLPFSVVATMIFSSVCYWT). Residues 490-500 (LGLHPEVARFG) are Extracellular-facing. Residues 501 to 521 (YFSAALLAPHLIGEFLTLVLL) form a helical membrane-spanning segment. Residues 522–528 (GIVQNPN) lie on the Cytoplasmic side of the membrane. The chain crosses the membrane as a helical span at residues 529–549 (IVNSVVALLSIAGVLVGSGFL). The Extracellular portion of the chain corresponds to 550 to 623 (RNIQEMPIPF…PGATSRFTMN (74 aa)). 2 N-linked (GlcNAc...) asparagine glycosylation sites follow: Asn-584 and Asn-591. A helical membrane pass occupies residues 624–644 (FLILYSFIPALVILGIVVFKI). Residues 645 to 651 (RDHLISR) are Cytoplasmic-facing.

Belongs to the ABC transporter superfamily. ABCG family. Eye pigment precursor importer (TC 3.A.1.204) subfamily. Heterodimer with ABCG8. Mg(2+) is required as a cofactor. N-glycosylated. In terms of tissue distribution, strongly expressed in the liver, lower levels in the small intestine and colon.

The protein resides in the cell membrane. Its subcellular location is the apical cell membrane. It catalyses the reaction cholesterol(in) + ATP + H2O = cholesterol(out) + ADP + phosphate + H(+). The enzyme catalyses sitosterol(in) + ATP + H2O = sitosterol(out) + ADP + phosphate + H(+). The ATPase activity of the heterodimer is stimulated by cholate. Taurocholate, glycocholate, taurochenodeoxycholate, glycochenodeoxycholate and taurodeoxycholate also stimulate ATPase activity, but to a lower degree. Glycodeoxycholate has no significant effect on ATPase activity. ATPase activity is inhibited by vanadate and by berillium fluoride. In terms of biological role, ABCG5 and ABCG8 form an obligate heterodimer that mediates Mg(2+)- and ATP-dependent sterol transport across the cell membrane. Plays an essential role in the selective transport of dietary plant sterols and cholesterol in and out of the enterocytes and in the selective sterol excretion by the liver into bile. Required for normal sterol homeostasis. The heterodimer with ABCG8 has ATPase activity. The chain is ATP-binding cassette sub-family G member 5 from Homo sapiens (Human).